Here is a 617-residue protein sequence, read N- to C-terminus: UvrABC system protein C (617 aa).

The GIY-YIG domain occupies 22-100; it reads NLPGVYRFFN…IKALSPKYNI (79 aa). Residues 209 to 244 form the UVR domain; it reads DELTRTLQHKMQTAAANLQFEEAARYRDQIQALGIM.

The protein belongs to the UvrC family. In terms of assembly, interacts with UvrB in an incision complex.

It is found in the cytoplasm. Its function is as follows. The UvrABC repair system catalyzes the recognition and processing of DNA lesions. UvrC both incises the 5' and 3' sides of the lesion. The N-terminal half is responsible for the 3' incision and the C-terminal half is responsible for the 5' incision. This Neisseria meningitidis serogroup B (strain ATCC BAA-335 / MC58) protein is UvrABC system protein C.